We begin with the raw amino-acid sequence, 367 residues long: MEAERQNQLVARLEDYAEREQALRRYLDYDAKSERLQVVNAELEDPAIWNDPKHAQDLGREKKSLEDVVETLTELGSGLADSCELVELALADSDDATLEAIEHDADRFQEKLETLEFRRMFANPADPLNCFVDIQAGAGGTEAQDWASMLLRQYLKYAERKGFKAEILEESEGDVAGLKSATIKIEGEYAFGYLRTETGVHRLVRKSPFDSSGGRHTSFASVFVYPEVDESFEVEVNPADLRIDTYRASGAGGQHINKTDSAVRITHAPSGIVVQCQNDRSQHRNRAEAMQMLKSKLYELEMRNRMTEQQKLEDSKTDVGWGHQIRSYVLDQSRIKDLRTNVEISNTQKVLDGDLDPFIQASLKQGV.

Position 254 is an N5-methylglutamine (glutamine 254).

Belongs to the prokaryotic/mitochondrial release factor family. Methylated by PrmC. Methylation increases the termination efficiency of RF2.

It is found in the cytoplasm. In terms of biological role, peptide chain release factor 2 directs the termination of translation in response to the peptide chain termination codons UGA and UAA. This is Peptide chain release factor 2 from Bordetella bronchiseptica (strain ATCC BAA-588 / NCTC 13252 / RB50) (Alcaligenes bronchisepticus).